The chain runs to 866 residues: Leucine--tRNA ligase (866 aa).

Residues 59-69 carry the 'HIGH' region motif; it reads PYPSGDLHMGH. The segment at 393–421 is disordered; that stretch reads VPVIKTDPQTGEPLLPESAPLESPAETGQ. Residues 404–418 are compositionally biased toward low complexity; the sequence is EPLLPESAPLESPAE. Residues 628–632 carry the 'KMSKS' region motif; sequence AMSKS. Residue Lys631 coordinates ATP.

It belongs to the class-I aminoacyl-tRNA synthetase family.

It localises to the cytoplasm. The catalysed reaction is tRNA(Leu) + L-leucine + ATP = L-leucyl-tRNA(Leu) + AMP + diphosphate. This chain is Leucine--tRNA ligase, found in Leifsonia xyli subsp. xyli (strain CTCB07).